Reading from the N-terminus, the 298-residue chain is Cholesterol 25-hydroxylase (298 aa).

Asn-5 carries an N-linked (GlcNAc...) asparagine glycan. 3 consecutive transmembrane segments (helical) span residues 38–58 (FFPV…FVVL), 84–104 (LLPC…PVTL), and 124–144 (LLSH…AWHL). Residues 128–263 (VLICLLLFDT…FTHWDKMLGT (136 aa)) form the Fatty acid hydroxylase domain. The Histidine box-1 motif lies at 142 to 146 (WHLLH). The Histidine box-2 motif lies at 157-161 (HKVHH). Asn-163 carries an N-linked (GlcNAc...) asparagine glycan. The next 2 helical transmembrane spans lie at 167–187 (FALA…FFDV) and 190–210 (VAML…NIWL). Residues 238 to 244 (HHDLHHS) carry the Histidine box-3 motif.

It belongs to the sterol desaturase family. It depends on Fe cation as a cofactor. In terms of processing, N-glycosylated. As to expression, expressed in testicular macrophages at all stages, with the highest level in 10 day old animals.

The protein localises to the endoplasmic reticulum membrane. It carries out the reaction cholesterol + AH2 + O2 = 25-hydroxycholesterol + A + H2O. It catalyses the reaction cholesterol + NADPH + O2 + H(+) = 25-hydroxycholesterol + NADP(+) + H2O. Functionally, catalyzes the formation of 25-hydroxycholesterol from cholesterol, leading to repress cholesterol biosynthetic enzymes. Plays a key role in cell positioning and movement in lymphoid tissues: 25-hydroxycholesterol is an intermediate in biosynthesis of 7-alpha,25-dihydroxycholesterol (7-alpha,25-OHC), an oxysterol that acts as a ligand for the G protein-coupled receptor GPR183/EBI2, a chemotactic receptor for a number of lymphoid cells. May play an important role in regulating lipid metabolism by synthesizing a corepressor that blocks sterol regulatory element binding protein (SREBP) processing. In testis, production of 25-hydroxycholesterol by macrophages plays a role in Leydig cell differentiation. Required to restrain inflammation in macrophages: production of 25-hydroxycholesterol protects macrophages from cholesterol overload, thereby preventing mitochondrial DNA release and subsequent activation of the AIM2 inflammasome. Interferon-stimulated gene which has broad antiviral activities against a wide range of enveloped viruses. Its function is as follows. Catalyzes the formation of 25-hydroxycholesterol from cholesterol, leading to repress cholesterol biosynthetic enzymes. Plays a key role in cell positioning and movement in lymphoid tissues: 25-hydroxycholesterol is an intermediate in biosynthesis of 7-alpha,25-dihydroxycholesterol (7-alpha,25-OHC), an oxysterol that acts as a ligand for the G protein-coupled receptor GPR183/EBI2, a chemotactic receptor for a number of lymphoid cells. May play an important role in regulating lipid metabolism by synthesizing a corepressor that blocks sterol regulatory element binding protein (SREBP) processing. As an interferon-stimulated gene, has broad antiviral activities against a wide range of enveloped viruses. Its product, 25-hydroxycholesterol, activates the ER-localized enzyme ACAT to induce internalization of accessible cholesterol on the plasma membrane and restricts virus-host membranes fusion which inhibits virus replication. In testis, production of 25-hydroxycholesterol by macrophages plays a role in Leydig cell differentiation. This is Cholesterol 25-hydroxylase from Rattus norvegicus (Rat).